The chain runs to 307 residues: 4-hydroxy-tetrahydrodipicolinate synthase (307 aa).

S57 is a binding site for pyruvate. Y145 functions as the Proton donor/acceptor in the catalytic mechanism. Residue K173 is the Schiff-base intermediate with substrate of the active site. Residue I219 coordinates pyruvate.

The protein belongs to the DapA family. As to quaternary structure, homotetramer; dimer of dimers.

Its subcellular location is the cytoplasm. The enzyme catalyses L-aspartate 4-semialdehyde + pyruvate = (2S,4S)-4-hydroxy-2,3,4,5-tetrahydrodipicolinate + H2O + H(+). Its pathway is amino-acid biosynthesis; L-lysine biosynthesis via DAP pathway; (S)-tetrahydrodipicolinate from L-aspartate: step 3/4. Catalyzes the condensation of (S)-aspartate-beta-semialdehyde [(S)-ASA] and pyruvate to 4-hydroxy-tetrahydrodipicolinate (HTPA). This is 4-hydroxy-tetrahydrodipicolinate synthase from Polynucleobacter asymbioticus (strain DSM 18221 / CIP 109841 / QLW-P1DMWA-1) (Polynucleobacter necessarius subsp. asymbioticus).